The primary structure comprises 309 residues: Formamidopyrimidine-DNA glycosylase (309 aa).

The active-site Schiff-base intermediate with DNA is Pro2. Glu3 serves as the catalytic Proton donor. The Proton donor; for beta-elimination activity role is filled by Lys56. DNA is bound by residues His106 and Arg129. The segment at 271–305 adopts an FPG-type zinc-finger fold; that stretch reads NVYGRQGNACPHCESTLENIKLNGRASVYCPLCQP. Arg295 serves as the catalytic Proton donor; for delta-elimination activity.

Belongs to the FPG family. Monomer. Requires Zn(2+) as cofactor.

The enzyme catalyses Hydrolysis of DNA containing ring-opened 7-methylguanine residues, releasing 2,6-diamino-4-hydroxy-5-(N-methyl)formamidopyrimidine.. It carries out the reaction 2'-deoxyribonucleotide-(2'-deoxyribose 5'-phosphate)-2'-deoxyribonucleotide-DNA = a 3'-end 2'-deoxyribonucleotide-(2,3-dehydro-2,3-deoxyribose 5'-phosphate)-DNA + a 5'-end 5'-phospho-2'-deoxyribonucleoside-DNA + H(+). In terms of biological role, involved in base excision repair of DNA damaged by oxidation or by mutagenic agents. Acts as a DNA glycosylase that recognizes and removes damaged bases. Has a preference for oxidized purines, such as 7,8-dihydro-8-oxoguanine (8-oxoG). Has AP (apurinic/apyrimidinic) lyase activity and introduces nicks in the DNA strand. Cleaves the DNA backbone by beta-delta elimination to generate a single-strand break at the site of the removed base with both 3'- and 5'-phosphates. The polypeptide is Formamidopyrimidine-DNA glycosylase (Psychrobacter arcticus (strain DSM 17307 / VKM B-2377 / 273-4)).